Here is a 116-residue protein sequence, read N- to C-terminus: Iron-sulfur cluster insertion protein ErpA (116 aa).

Iron-sulfur cluster is bound by residues C44, C108, and C110.

This sequence belongs to the HesB/IscA family. Homodimer. The cofactor is iron-sulfur cluster.

Its function is as follows. Required for insertion of 4Fe-4S clusters for at least IspG. The sequence is that of Iron-sulfur cluster insertion protein ErpA from Shewanella piezotolerans (strain WP3 / JCM 13877).